Consider the following 339-residue polypeptide: Caspase drICE (339 aa).

A propeptide spanning residues 1–28 (MDATNNGESADQVGIRVGNPEQPNDHTD) is cleaved from the precursor. A disordered region spans residues 1–45 (MDATNNGESADQVGIRVGNPEQPNDHTDALGSVGSGGAGSSGLVA). Active-site residues include H169 and C211. A propeptide spanning residues 218 to 230 (GGVTMQRSQTETD) is cleaved from the precursor.

Belongs to the peptidase C14A family. As to quaternary structure, heterotetramer that consists of two anti-parallel arranged heterodimers, each one formed by a 21 kDa (p21) and a 12 kDa (p12) subunit. Inactive pro-form can homodimerize. Dronc and Drice can form a stable complex. Interacts with Diap2 (via BIR3 domain) to form a stable complex. May interact with some isoforms of Dark.

Its activity is regulated as follows. Zymogen activated by proteolytic cleavage; cleaved by the initiator caspase Dronc upon apoptosis induction. Functionally, involved in the activation cascade of caspases responsible for apoptosis execution. Acts downstream of rpr. Cleaves baculovirus p35 and lamin DmO in vitro. The polypeptide is Caspase drICE (Drice) (Drosophila melanogaster (Fruit fly)).